Reading from the N-terminus, the 246-residue chain is Probable transcriptional regulatory protein YebC (246 aa).

The tract at residues 1–20 is disordered; that stretch reads MAGHSKWANTRHRKAAQDAK.

Belongs to the TACO1 family.

It is found in the cytoplasm. The chain is Probable transcriptional regulatory protein YebC from Salmonella typhimurium (strain LT2 / SGSC1412 / ATCC 700720).